We begin with the raw amino-acid sequence, 278 residues long: uncharacterized protein (278 aa).

The protein belongs to the short-chain dehydrogenases/reductases (SDR) family.

This is an uncharacterized protein from Bacillus subtilis (strain 168).